Consider the following 282-residue polypeptide: Tumor necrosis factor ligand superfamily member 6 (282 aa).

The Cytoplasmic segment spans residues methionine 1 to leucine 82. The interval phenylalanine 30 to lysine 73 is disordered. Positions arginine 43–serine 71 are enriched in pro residues. A helical; Signal-anchor for type II membrane protein membrane pass occupies residues cysteine 83–phenylalanine 103. Over glutamine 104–leucine 282 the chain is Extracellular. Residues alanine 119–isoleucine 132 show a composition bias toward basic and acidic residues. The tract at residues alanine 119–glutamate 140 is disordered. A THD domain is found at lysine 146–leucine 282. Asparagine 185 carries an N-linked (GlcNAc...) asparagine glycan. An intrachain disulfide couples cysteine 203 to cysteine 234. Residues asparagine 251 and asparagine 261 are each glycosylated (N-linked (GlcNAc...) asparagine).

It belongs to the tumor necrosis factor family. As to quaternary structure, homotrimer. Interacts with ARHGAP9, BAIAP2L1, BTK, CACNB3, CACNB4, CRK, DLG2, DNMBP, DOCK4, EPS8L3, FGR, FYB1, FYN, HCK, ITK, ITSN2, KALRN, LYN, MACC1, MIA, MPP4, MYO15A, NCF1, NCK1, NCK2, NCKIPSD, OSTF1, PIK3R1, PSTPIP1, RIMBP3C, SAMSN1, SH3GL3, SH3PXD2B, SH3PXD2A, SH3RF2, SKAP2, SNX33, SNX9, SORBS3, SPTA1, SRC, SRGAP1, SRGAP2, SRGAP3, TEC, TJP3 and YES1. Post-translationally, the soluble form derives from the membrane form by proteolytic processing. The membrane-bound form undergoes two successive intramembrane proteolytic cleavages. The first one is processed by ADAM10 producing an N-terminal fragment, which lacks the receptor-binding extracellular domain. This ADAM10-processed FasL (FasL APL) remnant form is still membrane anchored and further processed by SPPL2A that liberates the FasL intracellular domain (FasL ICD). FasL shedding by ADAM10 is a prerequisite for subsequent intramembrane cleavage by SPPL2A in T-cells. Phosphorylated by FGR on tyrosine residues; this is required for ubiquitination and subsequent internalization. In terms of processing, N-glycosylated. Glycosylation enhances apoptotic activity. Post-translationally, monoubiquitinated.

It localises to the cell membrane. It is found in the cytoplasmic vesicle lumen. The protein resides in the lysosome lumen. Its subcellular location is the secreted. The protein localises to the nucleus. Cytokine that binds to TNFRSF6/FAS, a receptor that transduces the apoptotic signal into cells. Involved in cytotoxic T-cell-mediated apoptosis, natural killer cell-mediated apoptosis and in T-cell development. Initiates fratricidal/suicidal activation-induced cell death (AICD) in antigen-activated T-cells contributing to the termination of immune responses. TNFRSF6/FAS-mediated apoptosis also has a role in the induction of peripheral tolerance. Binds to TNFRSF6B/DcR3, a decoy receptor that blocks apoptosis. Functionally, induces FAS-mediated activation of NF-kappa-B, initiating non-apoptotic signaling pathways. Can induce apoptosis but does not appear to be essential for this process. In terms of biological role, cytoplasmic form induces gene transcription inhibition. The sequence is that of Tumor necrosis factor ligand superfamily member 6 (FASLG) from Sus scrofa (Pig).